Consider the following 222-residue polypeptide: Peptidyl-prolyl cis-trans isomerase FKBP7 (222 aa).

The first 23 residues, 1 to 23 (MPKTMHFLFRFIVFFYLWGLFTA), serve as a signal peptide directing secretion. N45 is a glycosylation site (N-linked (GlcNAc...) asparagine). Residues 53–145 (GDLLNAHYDG…IFEIELYAVT (93 aa)) form the PPIase FKBP-type domain. 2 consecutive EF-hand domains span residues 145-180 (TKGP…EFEK) and 189-222 (YQDA…HDEL). Positions 158, 160, 162, 164, 169, 202, 204, 206, and 213 each coordinate Ca(2+). The Prevents secretion from ER signature appears at 219–222 (HDEL).

Post-translationally, glycosylated.

It localises to the endoplasmic reticulum lumen. The enzyme catalyses [protein]-peptidylproline (omega=180) = [protein]-peptidylproline (omega=0). Functionally, PPIases accelerate the folding of proteins during protein synthesis. The protein is Peptidyl-prolyl cis-trans isomerase FKBP7 (FKBP7) of Pongo abelii (Sumatran orangutan).